The sequence spans 309 residues: 4-hydroxy-3-methylbut-2-enyl diphosphate reductase (309 aa).

Residue Cys13 participates in [4Fe-4S] cluster binding. 2 residues coordinate (2E)-4-hydroxy-3-methylbut-2-enyl diphosphate: His42 and His75. Dimethylallyl diphosphate contacts are provided by His42 and His75. Positions 42 and 75 each coordinate isopentenyl diphosphate. Residue Cys97 participates in [4Fe-4S] cluster binding. (2E)-4-hydroxy-3-methylbut-2-enyl diphosphate is bound at residue His125. His125 lines the dimethylallyl diphosphate pocket. His125 is an isopentenyl diphosphate binding site. The Proton donor role is filled by Glu127. Thr165 serves as a coordination point for (2E)-4-hydroxy-3-methylbut-2-enyl diphosphate. Cys195 is a [4Fe-4S] cluster binding site. Ser223, Ser224, Asn225, and Ser267 together coordinate (2E)-4-hydroxy-3-methylbut-2-enyl diphosphate. Residues Ser223, Ser224, Asn225, and Ser267 each coordinate dimethylallyl diphosphate. Positions 223, 224, 225, and 267 each coordinate isopentenyl diphosphate.

Belongs to the IspH family. The cofactor is [4Fe-4S] cluster.

It carries out the reaction isopentenyl diphosphate + 2 oxidized [2Fe-2S]-[ferredoxin] + H2O = (2E)-4-hydroxy-3-methylbut-2-enyl diphosphate + 2 reduced [2Fe-2S]-[ferredoxin] + 2 H(+). It catalyses the reaction dimethylallyl diphosphate + 2 oxidized [2Fe-2S]-[ferredoxin] + H2O = (2E)-4-hydroxy-3-methylbut-2-enyl diphosphate + 2 reduced [2Fe-2S]-[ferredoxin] + 2 H(+). Its pathway is isoprenoid biosynthesis; dimethylallyl diphosphate biosynthesis; dimethylallyl diphosphate from (2E)-4-hydroxy-3-methylbutenyl diphosphate: step 1/1. It participates in isoprenoid biosynthesis; isopentenyl diphosphate biosynthesis via DXP pathway; isopentenyl diphosphate from 1-deoxy-D-xylulose 5-phosphate: step 6/6. Its function is as follows. Catalyzes the conversion of 1-hydroxy-2-methyl-2-(E)-butenyl 4-diphosphate (HMBPP) into a mixture of isopentenyl diphosphate (IPP) and dimethylallyl diphosphate (DMAPP). Acts in the terminal step of the DOXP/MEP pathway for isoprenoid precursor biosynthesis. The protein is 4-hydroxy-3-methylbut-2-enyl diphosphate reductase of Chlamydia felis (strain Fe/C-56) (Chlamydophila felis).